The sequence spans 219 residues: GPI ethanolamine phosphate transferase, stabilizing subunit (219 aa).

A run of 6 helical transmembrane segments spans residues 11-31 (YTHL…SLFL), 42-62 (TWLC…YLVV), 86-106 (YFLM…APLI), 113-133 (FLFA…LLGP), 155-175 (LQIT…PIPL), and 189-209 (TLGA…WIYW).

It belongs to the PIGF family. As to quaternary structure, part of the ethanolamine phosphate transferase 3 complex composed by PIGO and PIGF. Part of the ethanolamine phosphate transferase 2 complex with PIGG. PIGF is required to stabilize PIGG and PIGO.

The protein resides in the endoplasmic reticulum membrane. The protein operates within glycolipid biosynthesis; glycosylphosphatidylinositol-anchor biosynthesis. In terms of biological role, stabilizing subunit of the ethanolamine phosphate transferase 3 and ethanolamine phosphate transferase 2 complexes that sequentially transfer an ethanolamine phosphate (EtNP) from a phosphatidylethanolamine (PE) to the 6-OH position of the third alpha-1,2-linked mannose and the second alpha-1,6-linked mannose of the alpha-D-Man-(1-&gt;2)-alpha-D-Man-(1-&gt;6)-2-PEtn-alpha-D-Man-(1-&gt;4)-alpha-D-GlcN-(1-&gt;6)-(1-radyl,2-acyl-sn-glycero-3-phospho)-2-acyl-inositol (also termed H6) intermediate to generate a 6-PEtn-alpha-D-Man-(1-&gt;2)-6-PEtn-alpha-D-Man-(1-&gt;6)-2-PEtn-alpha-D-Man-(1-&gt;4)-alpha-D-GlcN-(1-&gt;6)-(1-radyl,2-acyl-sn-glycero-3-phospho)-2-acyl-inositol (also termed H8). Participates in the tenth and eleventh steps of the glycosylphosphatidylinositol-anchor biosynthesis, in association with PIGO and PIGG, respectively. The sequence is that of GPI ethanolamine phosphate transferase, stabilizing subunit from Homo sapiens (Human).